We begin with the raw amino-acid sequence, 229 residues long: 7-cyano-7-deazaguanine synthase (229 aa).

8-18 (CSGGLDSSVIA) contributes to the ATP binding site. Zn(2+) contacts are provided by Cys-190, Cys-203, Cys-206, and Cys-209.

It belongs to the QueC family. The cofactor is Zn(2+).

It catalyses the reaction 7-carboxy-7-deazaguanine + NH4(+) + ATP = 7-cyano-7-deazaguanine + ADP + phosphate + H2O + H(+). It participates in purine metabolism; 7-cyano-7-deazaguanine biosynthesis. In terms of biological role, catalyzes the ATP-dependent conversion of 7-carboxy-7-deazaguanine (CDG) to 7-cyano-7-deazaguanine (preQ(0)). This Methanopyrus kandleri (strain AV19 / DSM 6324 / JCM 9639 / NBRC 100938) protein is 7-cyano-7-deazaguanine synthase.